Consider the following 177-residue polypeptide: Putative adenylate kinase (177 aa).

Residues G10, G12, K13, T14, and T15 each contribute to the ATP site. The segment at 30 to 53 is NMP; it reads DITEAVKKYKLYTEKDEDMDSYVI. Residues 103–113 are LID; the sequence is KRGYKPKKVLE. Residue R104 coordinates ATP.

It belongs to the adenylate kinase family. AK6 subfamily. In terms of assembly, interacts with uS11. Not a structural component of 40S pre-ribosomes, but transiently interacts with them by binding to uS11.

The enzyme catalyses AMP + ATP = 2 ADP. It carries out the reaction ATP + H2O = ADP + phosphate + H(+). Functionally, broad-specificity nucleoside monophosphate (NMP) kinase that catalyzes the reversible transfer of the terminal phosphate group between nucleoside triphosphates and monophosphates. Also has ATPase activity. Involved in the late maturation steps of the 30S ribosomal particles, specifically 16S rRNA maturation. While NMP activity is not required for ribosome maturation, ATPase activity is. Associates transiently with small ribosomal subunit protein uS11. ATP hydrolysis breaks the interaction with uS11. May temporarily remove uS11 from the ribosome to enable a conformational change of the ribosomal RNA that is needed for the final maturation step of the small ribosomal subunit. The sequence is that of Putative adenylate kinase from Methanocaldococcus jannaschii (strain ATCC 43067 / DSM 2661 / JAL-1 / JCM 10045 / NBRC 100440) (Methanococcus jannaschii).